Here is a 405-residue protein sequence, read N- to C-terminus: 4-hydroxy-3-methylbut-2-enyl diphosphate reductase (405 aa).

C66 is a [4Fe-4S] cluster binding site. Position 96 (H96) interacts with (2E)-4-hydroxy-3-methylbut-2-enyl diphosphate. A dimethylallyl diphosphate-binding site is contributed by H96. H96 is a binding site for isopentenyl diphosphate. C157 is a binding site for [4Fe-4S] cluster. H185 contributes to the (2E)-4-hydroxy-3-methylbut-2-enyl diphosphate binding site. H185 lines the dimethylallyl diphosphate pocket. H185 provides a ligand contact to isopentenyl diphosphate. Residue E187 is the Proton donor of the active site. T250 contacts (2E)-4-hydroxy-3-methylbut-2-enyl diphosphate. A [4Fe-4S] cluster-binding site is contributed by C288. (2E)-4-hydroxy-3-methylbut-2-enyl diphosphate is bound by residues S317, S318, N319, and S380. Dimethylallyl diphosphate contacts are provided by S317, S318, N319, and S380. Residues S317, S318, N319, and S380 each contribute to the isopentenyl diphosphate site.

It belongs to the IspH family. Requires [4Fe-4S] cluster as cofactor.

It carries out the reaction isopentenyl diphosphate + 2 oxidized [2Fe-2S]-[ferredoxin] + H2O = (2E)-4-hydroxy-3-methylbut-2-enyl diphosphate + 2 reduced [2Fe-2S]-[ferredoxin] + 2 H(+). The enzyme catalyses dimethylallyl diphosphate + 2 oxidized [2Fe-2S]-[ferredoxin] + H2O = (2E)-4-hydroxy-3-methylbut-2-enyl diphosphate + 2 reduced [2Fe-2S]-[ferredoxin] + 2 H(+). The protein operates within isoprenoid biosynthesis; dimethylallyl diphosphate biosynthesis; dimethylallyl diphosphate from (2E)-4-hydroxy-3-methylbutenyl diphosphate: step 1/1. It participates in isoprenoid biosynthesis; isopentenyl diphosphate biosynthesis via DXP pathway; isopentenyl diphosphate from 1-deoxy-D-xylulose 5-phosphate: step 6/6. Its function is as follows. Catalyzes the conversion of 1-hydroxy-2-methyl-2-(E)-butenyl 4-diphosphate (HMBPP) into a mixture of isopentenyl diphosphate (IPP) and dimethylallyl diphosphate (DMAPP). Acts in the terminal step of the DOXP/MEP pathway for isoprenoid precursor biosynthesis. This chain is 4-hydroxy-3-methylbut-2-enyl diphosphate reductase, found in Prochlorococcus marinus (strain SARG / CCMP1375 / SS120).